The following is a 208-amino-acid chain: Na(+)-translocating NADH-quinone reductase subunit D (208 aa).

Transmembrane regions (helical) follow at residues 42–62, 72–92, 103–123, 131–151, and 178–198; these read IVMG…ISLV, IIVQ…LLQA, VFVG…AFAM, LIDG…VATV, and NGLF…IWGL.

The protein belongs to the NqrDE/RnfAE family. Composed of six subunits; NqrA, NqrB, NqrC, NqrD, NqrE and NqrF.

The protein resides in the cell inner membrane. It catalyses the reaction a ubiquinone + n Na(+)(in) + NADH + H(+) = a ubiquinol + n Na(+)(out) + NAD(+). In terms of biological role, NQR complex catalyzes the reduction of ubiquinone-1 to ubiquinol by two successive reactions, coupled with the transport of Na(+) ions from the cytoplasm to the periplasm. NqrA to NqrE are probably involved in the second step, the conversion of ubisemiquinone to ubiquinol. The chain is Na(+)-translocating NADH-quinone reductase subunit D from Neisseria meningitidis serogroup B (strain ATCC BAA-335 / MC58).